The following is a 407-amino-acid chain: Large ribosomal subunit protein uL3-like (407 aa).

Basic residues predominate over residues 1-31; sequence MSHRKFSAPRHGHLGFLPHKRSRRHRGKVKS. The disordered stretch occupies residues 1-37; that stretch reads MSHRKFSAPRHGHLGFLPHKRSRRHRGKVKSWPRDDP.

The protein belongs to the universal ribosomal protein uL3 family. As to quaternary structure, component of the large ribosomal subunit (LSU). Part of a LSU subcomplex, the 5S RNP which is composed of the 5S RNA, RPL5 and RPL11. Interacts with NVL in an ATP-dependent manner. Interacts with RRP1B. Interacts with IPO5, IPO7 and KPNB1; these interactions may be involved in RPL5 nuclear import for the assembly of ribosomal subunits. Interacts with RRP1B. In terms of tissue distribution, expression is restricted to striated muscles.

Functionally, heart- and skeletal muscle-specific component of the ribosome, which regulates muscle function. Component of the large ribosomal subunit in striated muscle cells: replaces the RPL3 paralog in the ribosome in these cells. The ribosome is a large ribonucleoprotein complex responsible for the synthesis of proteins in the cell. Inhibits myotube growth and muscle function. The polypeptide is Large ribosomal subunit protein uL3-like (Mus musculus (Mouse)).